A 510-amino-acid chain; its full sequence is Inner membrane protein YeeR (510 aa).

Met1 is a topological domain (cytoplasmic). Residues 2 to 22 (LQIVGALILLIAGFAILRLLF) traverse the membrane as a helical segment. Over 23-30 (RALISTAS) the chain is Periplasmic. A helical transmembrane segment spans residues 31–51 (ALAGLILLCLFGPALLAGYIT). The Cytoplasmic portion of the chain corresponds to 52 to 61 (ERITRLFHIR). Residues 62-82 (WLAGVFLTIAGMIISFMWGLD) form a helical membrane-spanning segment. Residues 83–94 (GKHIALEAHTFD) lie on the Periplasmic side of the membrane. The helical transmembrane segment at 95 to 115 (SVKFILTTALAGGLLAVPLQI) threads the bilayer. At 116-136 (KNIQQNGITPEDISKEINGYY) the chain is on the cytoplasmic side. Residues 137-157 (CCFYTAFFLMACSACAPLIAL) form a helical membrane-spanning segment. The Periplasmic segment spans residues 158–164 (QYDISPS). A helical transmembrane segment spans residues 165–185 (LMWWGGLLYWLAALVTLLWAA). Over 186-510 (SQIQALKKLT…KIREGKVEER (325 aa)) the chain is Cytoplasmic.

The protein localises to the cell inner membrane. The sequence is that of Inner membrane protein YeeR (yeeR) from Escherichia coli (strain K12).